The following is a 188-amino-acid chain: GMP synthase [glutamine-hydrolyzing] subunit A (188 aa).

Residues 2-188 (KIYIIDNGGQ…FKNFIEKCRR (187 aa)) enclose the Glutamine amidotransferase type-1 domain. Cys-79 acts as the Nucleophile in catalysis. Catalysis depends on residues His-166 and Glu-168.

In terms of assembly, heterodimer composed of a glutamine amidotransferase subunit (A) and a GMP-binding subunit (B).

It catalyses the reaction XMP + L-glutamine + ATP + H2O = GMP + L-glutamate + AMP + diphosphate + 2 H(+). It participates in purine metabolism; GMP biosynthesis; GMP from XMP (L-Gln route): step 1/1. Its function is as follows. Catalyzes the synthesis of GMP from XMP. This Picrophilus torridus (strain ATCC 700027 / DSM 9790 / JCM 10055 / NBRC 100828 / KAW 2/3) protein is GMP synthase [glutamine-hydrolyzing] subunit A.